The following is a 281-amino-acid chain: Transcription factor LBX1 (281 aa).

Basic and acidic residues predominate over residues 1–20 (MTSKEDGKAAPGEERRRSPL). A disordered region spans residues 1-35 (MTSKEDGKAAPGEERRRSPLDHLPPPANSNKPLTP). The segment at residues 125–184 (RRKSRTAFTNHQIYELEKRFLYQKYLSPADRDQIAQQLGLTNAQVITWFQNRRAKLKRDL) is a DNA-binding region (homeobox). The tract at residues 214–281 (NSEATAGGGG…EEDEEIDVDD (68 aa)) is disordered. Residues 253–267 (SPASPLTDQPASSQD) show a composition bias toward polar residues. Acidic residues predominate over residues 268-281 (CSEDEEDEEIDVDD).

In terms of assembly, interacts with SKOR1 which acts as a transcriptional corepressor.

The protein resides in the nucleus. Transcription factor required for the development of GABAergic interneurons in the dorsal horn of the spinal cord and migration and further development of hypaxial muscle precursor cells for limb muscles, diaphragm and hypoglossal cord. This chain is Transcription factor LBX1 (LBX1), found in Homo sapiens (Human).